Consider the following 192-residue polypeptide: MAAWGRRRLGPGSSGGSARERVSLSATDCYIVHEIYNGENAQDQFEYELEQALEAQYKYIVIEPTRIGDETARWITVGNCLHKTAVLAGTACLFTPLALPLDYSHYISLPAGVLSLACCTLYGISWQFDPCCKYQVEYDAYKLSRLPLHTLTSSTPVVLVRKDDLHRKRLHNTIALAALVYCVKKIYELYAV.

The interval 1 to 20 (MAAWGRRRLGPGSSGGSARE) is disordered. A run of 2 helical transmembrane segments spans residues 84 to 100 (TAVL…LALP) and 107 to 124 (ISLP…LYGI).

Belongs to the TMEM11 family. Associates with the mitochondrial contact site and cristae organizing system (MICOS) complex, composed of at least MICOS10/MIC10, CHCHD3/MIC19, CHCHD6/MIC25, APOOL/MIC27, IMMT/MIC60, APOO/MIC23/MIC26 and QIL1/MIC13. This complex was also known under the names MINOS or MitOS complex. The MICOS complex associates with mitochondrial outer membrane proteins SAMM50, MTX1, MTX2 and DNAJC11, mitochondrial inner membrane protein TMEM11 and with HSPA9. Interacts with IMMT/MIC60.

It is found in the mitochondrion inner membrane. In terms of biological role, plays a role in mitochondrial morphogenesis. The polypeptide is Transmembrane protein 11, mitochondrial (TMEM11) (Homo sapiens (Human)).